Reading from the N-terminus, the 58-residue chain is ATP synthase F(0) complex subunit k, mitochondrial (58 aa).

An N6-acetyllysine mark is found at lysine 16 and lysine 17. The chain crosses the membrane as a helical span at residues 23-45; sequence TLTGRMNCVLATYGSIALIVLYF.

In terms of assembly, component of the ATP synthase complex composed at least of ATP5F1A/subunit alpha, ATP5F1B/subunit beta, ATP5MC1/subunit c (homooctomer), MT-ATP6/subunit a, MT-ATP8/subunit 8, ATP5ME/subunit e, ATP5MF/subunit f, ATP5MG/subunit g, ATP5MK/subunit k, ATP5MJ/subunit j, ATP5F1C/subunit gamma, ATP5F1D/subunit delta, ATP5F1E/subunit epsilon, ATP5PF/subunit F6, ATP5PB/subunit b, ATP5PD/subunit d, ATP5PO/subunit OSCP. ATP synthase complex consists of a soluble F(1) head domain (subunits alpha(3) and beta(3)) - the catalytic core - and a membrane F(0) domain - the membrane proton channel (subunits c, a, 8, e, f, g, k and j). These two domains are linked by a central stalk (subunits gamma, delta, and epsilon) rotating inside the F1 region and a stationary peripheral stalk (subunits F6, b, d, and OSCP). The ATP synthase complex/complex V exists as a monomeric and a dimeric supercomplex that helps shape mitochondrial cristae to optimize proton flow.

It is found in the mitochondrion membrane. Its function is as follows. Subunit k, of the mitochondrial membrane ATP synthase complex (F(1)F(0) ATP synthase or Complex V) that produces ATP from ADP in the presence of a proton gradient across the membrane which is generated by electron transport complexes of the respiratory chain. ATP synthase complex consist of a soluble F(1) head domain - the catalytic core - and a membrane F(1) domain - the membrane proton channel. These two domains are linked by a central stalk rotating inside the F(1) region and a stationary peripheral stalk. During catalysis, ATP synthesis in the catalytic domain of F(1) is coupled via a rotary mechanism of the central stalk subunits to proton translocation. In vivo, can only synthesize ATP although its ATP hydrolase activity can be activated artificially in vitro. Part of the complex F(0) domain. Required for dimerization of the ATP synthase complex and as such regulates ATP synthesis in the mitochondria. This is ATP synthase F(0) complex subunit k, mitochondrial from Homo sapiens (Human).